Here is a 932-residue protein sequence, read N- to C-terminus: RNA-binding protein 12 (932 aa).

The disordered stretch occupies residues 97 to 116 (IPPANASRSGPPPSSGMSGR). Low complexity predominate over residues 98–116 (PPANASRSGPPPSSGMSGR). The 76-residue stretch at 304 to 379 (LYVSVHGMPF…RYVEVSPATE (76 aa)) folds into the RRM 1 domain. Ser-352 and Ser-375 each carry phosphoserine. The disordered stretch occupies residues 393–424 (QNMGPSGQSHPPPQTLPRSKSPSGQKRSRSRS). The span at 408 to 417 (LPRSKSPSGQ) shows a compositional bias: polar residues. 3 positions are modified to phosphoserine: Ser-420, Ser-422, and Ser-424. Positions 430-507 (FCVYLKGLPF…RFIQVHPITK (78 aa)) constitute an RRM 2 domain. Ser-525 is modified (phosphoserine). The span at 717 to 734 (NGPPFNFPGNFGGSNAFG) shows a compositional bias: low complexity. Residues 717–853 (NGPPFNFPGN…PGFASSSGKP (137 aa)) form a disordered region. Residues 783–811 (SGFGGGPQNFGNGPGSLGGPPGFGSGPPG) are compositionally biased toward gly residues. The segment covering 824–836 (AFGPGPGPGPGPG) has biased composition (pro residues). One can recognise an RRM 3 domain in the interval 856–932 (TVIKVQNMPF…GSRKVKLVLG (77 aa)).

It is found in the nucleus. This is RNA-binding protein 12 (RBM12) from Macaca mulatta (Rhesus macaque).